A 673-amino-acid chain; its full sequence is UvrABC system protein B (673 aa).

Residues 26–183 enclose the Helicase ATP-binding domain; sequence EGLEDGLAHQ…RRLAELQYAR (158 aa). 39–46 provides a ligand contact to ATP; it reads GVTGSGKT. The short motif at 92–115 is the Beta-hairpin element; that stretch reads YYDYYQPEAYVPSSDTFIEKDASV. Positions 431–597 constitute a Helicase C-terminal domain; that stretch reads QVDDLLSEIR…GLNKKVVDIL (167 aa). Positions 608–627 are disordered; it reads AKGRGKSRPIVEPDNVPMDM. One can recognise a UVR domain in the interval 633-668; sequence QQKIHELEGLMMQHAQNLEFEEAAQIRDQLHQLRDL.

Belongs to the UvrB family. As to quaternary structure, forms a heterotetramer with UvrA during the search for lesions. Interacts with UvrC in an incision complex.

The protein localises to the cytoplasm. Its function is as follows. The UvrABC repair system catalyzes the recognition and processing of DNA lesions. A damage recognition complex composed of 2 UvrA and 2 UvrB subunits scans DNA for abnormalities. Upon binding of the UvrA(2)B(2) complex to a putative damaged site, the DNA wraps around one UvrB monomer. DNA wrap is dependent on ATP binding by UvrB and probably causes local melting of the DNA helix, facilitating insertion of UvrB beta-hairpin between the DNA strands. Then UvrB probes one DNA strand for the presence of a lesion. If a lesion is found the UvrA subunits dissociate and the UvrB-DNA preincision complex is formed. This complex is subsequently bound by UvrC and the second UvrB is released. If no lesion is found, the DNA wraps around the other UvrB subunit that will check the other stand for damage. The chain is UvrABC system protein B from Escherichia coli O7:K1 (strain IAI39 / ExPEC).